Here is a 253-residue protein sequence, read N- to C-terminus: Allene oxide cyclase 2, chloroplastic (253 aa).

The transit peptide at 1–77 (MASSAVSLQS…SQNGNIENPR (77 aa)) directs the protein to the chloroplast.

Belongs to the allene oxide cyclase family. In terms of tissue distribution, highly expressed in fully developed leaves.

The protein localises to the plastid. It localises to the chloroplast. It carries out the reaction (9Z,13S,15Z)-12,13-epoxyoctadeca-9,11,15-trienoate = (9S,13S,15Z)-12-oxophyto-10,15-dienoate. Its function is as follows. Involved in the production of 12-oxo-phytodienoic acid (OPDA), a precursor of jasmonic acid. In Arabidopsis thaliana (Mouse-ear cress), this protein is Allene oxide cyclase 2, chloroplastic (AOC2).